We begin with the raw amino-acid sequence, 150 residues long: Transcription antitermination protein NusB (150 aa).

It belongs to the NusB family.

Its function is as follows. Involved in transcription antitermination. Required for transcription of ribosomal RNA (rRNA) genes. Binds specifically to the boxA antiterminator sequence of the ribosomal RNA (rrn) operons. In Saccharophagus degradans (strain 2-40 / ATCC 43961 / DSM 17024), this protein is Transcription antitermination protein NusB.